We begin with the raw amino-acid sequence, 329 residues long: Putative glucose ABC transporter permease protein TsgC13 (329 aa).

7 helical membrane-spanning segments follow: residues 3-23 (FAAGLLNATVQAATVLLLAGL), 32-52 (GVLNLGVEGMMLVGALGGFVV), 60-80 (WLGFGVGIACGMALAAVHAFL), 89-109 (VISGVMLTLLGTGLTTFFGSG), 139-161 (AFFRSTATDYLALLAVPVVWFFL), 193-213 (LAVIIGGGFAGAAGAHLSLAF), and 216-236 (LWVPGMTVGRGWIAVALVVFA).

Belongs to the binding-protein-dependent transport system permease family. In terms of assembly, the complex is composed of two ATP-binding proteins (TsgD13), two transmembrane proteins (TsgB13 and TsgC13) and a solute-binding protein (TsgA13).

It localises to the cell membrane. In terms of biological role, part of an ABC transporter complex involved in glucose import (Potential). Responsible for the translocation of the substrate across the membrane. The protein is Putative glucose ABC transporter permease protein TsgC13 (tsgC13) of Haloferax volcanii (strain ATCC 29605 / DSM 3757 / JCM 8879 / NBRC 14742 / NCIMB 2012 / VKM B-1768 / DS2) (Halobacterium volcanii).